We begin with the raw amino-acid sequence, 292 residues long: 4-hydroxy-tetrahydrodipicolinate synthase (292 aa).

T45 serves as a coordination point for pyruvate. Catalysis depends on Y133, which acts as the Proton donor/acceptor. K161 serves as the catalytic Schiff-base intermediate with substrate. Position 203 (I203) interacts with pyruvate.

It belongs to the DapA family. As to quaternary structure, homotetramer; dimer of dimers.

The protein localises to the cytoplasm. The enzyme catalyses L-aspartate 4-semialdehyde + pyruvate = (2S,4S)-4-hydroxy-2,3,4,5-tetrahydrodipicolinate + H2O + H(+). It participates in amino-acid biosynthesis; L-lysine biosynthesis via DAP pathway; (S)-tetrahydrodipicolinate from L-aspartate: step 3/4. In terms of biological role, catalyzes the condensation of (S)-aspartate-beta-semialdehyde [(S)-ASA] and pyruvate to 4-hydroxy-tetrahydrodipicolinate (HTPA). The polypeptide is 4-hydroxy-tetrahydrodipicolinate synthase (Shigella dysenteriae serotype 1 (strain Sd197)).